A 292-amino-acid polypeptide reads, in one-letter code: Phosphoribulokinase 2 (292 aa).

12 to 20 is a binding site for ATP; that stretch reads GSSGAGTST.

The protein belongs to the phosphoribulokinase family.

The enzyme catalyses D-ribulose 5-phosphate + ATP = D-ribulose 1,5-bisphosphate + ADP + H(+). Its pathway is carbohydrate biosynthesis; Calvin cycle. This chain is Phosphoribulokinase 2 (prkB), found in Cereibacter sphaeroides (Rhodobacter sphaeroides).